The chain runs to 444 residues: Putative permease IIC component YwbA (444 aa).

The PTS EIIC type-3 domain occupies 8–421 (MEEKIMPVAG…LITCAIYYPF (414 aa)). The next 10 helical transmembrane spans lie at 31 to 51 (GIIL…LTSL), 72 to 92 (LGYP…FGIA), 104 to 124 (LSAG…EVPF), 138 to 158 (GIPI…IALF), 187 to 207 (FVAL…RLLI), 223 to 243 (LGTP…AEFV), 246 to 266 (LLWS…APIW), 291 to 311 (FFQI…VLTM), 349 to 371 (PLLI…IGMS), and 402 to 422 (SGAV…YPFF).

Its subcellular location is the cell membrane. In terms of biological role, the phosphoenolpyruvate-dependent sugar phosphotransferase system (PTS), a major carbohydrate active -transport system, catalyzes the phosphorylation of incoming sugar substrates concomitant with their translocation across the cell membrane. This is Putative permease IIC component YwbA (ywbA) from Bacillus subtilis (strain 168).